Here is a 132-residue protein sequence, read N- to C-terminus: ATP synthase epsilon chain (132 aa).

It belongs to the ATPase epsilon chain family. As to quaternary structure, F-type ATPases have 2 components, CF(1) - the catalytic core - and CF(0) - the membrane proton channel. CF(1) has five subunits: alpha(3), beta(3), gamma(1), delta(1), epsilon(1). CF(0) has three main subunits: a, b and c.

It is found in the cell membrane. In terms of biological role, produces ATP from ADP in the presence of a proton gradient across the membrane. This chain is ATP synthase epsilon chain, found in Desulforamulus reducens (strain ATCC BAA-1160 / DSM 100696 / MI-1) (Desulfotomaculum reducens).